We begin with the raw amino-acid sequence, 424 residues long: MGVTIVLGSQWGDEGKGKITDMLAQQATLCCRAAGGHNAGHTIVHGDKTYDFHILPSGLVSPSCVNLIGAGTVVHVPSFFKELASLEDKGLEGAGKRIFISDRAHVCFDLHSVVDGLEEAKLGGRKVGTTGKGIGPCYSDKAARRGVRVGEILDEALFERKLRSLDAGYRARFGELEYNVEEELARFKEYRKRLGPYIVDQLAFLQKYKDAPNTLVEGANALMLDLDHGTYPFVTSSSTGLGGAVQALSLNPTSISSIIGVVKAYTTRVGSGPFPSEQLNDAGDKLQGVGKEFGVTTGRRRRCGWFDMVLCRYSQAINHYTALNLTKLDVLDDFDEIKVGVAYILPDGTRTENTMPADPEVLEKVQVEYVTLPGWKSNTMGVKKYEDLPANARAYIEYIERGLGGVPVKWIGTGPARDHMICRE.

Residues 12 to 18 (GDEGKGK) and 40 to 42 (GHT) contribute to the GTP site. The active-site Proton acceptor is Asp13. Positions 13 and 40 each coordinate Mg(2+). IMP is bound by residues 13–16 (DEGK), 38–41 (NAGH), Thr130, Arg144, Asn220, Thr235, and Arg299. Residue His41 is the Proton donor of the active site. Residue 295-301 (VTTGRRR) coordinates substrate. GTP contacts are provided by residues Arg301, 327-329 (KLD), and 412-414 (GTG).

Belongs to the adenylosuccinate synthetase family. Homodimer. The cofactor is Mg(2+).

The protein resides in the cytoplasm. The enzyme catalyses IMP + L-aspartate + GTP = N(6)-(1,2-dicarboxyethyl)-AMP + GDP + phosphate + 2 H(+). It functions in the pathway purine metabolism; AMP biosynthesis via de novo pathway; AMP from IMP: step 1/2. Its function is as follows. Plays an important role in the de novo pathway and in the salvage pathway of purine nucleotide biosynthesis. Catalyzes the first committed step in the biosynthesis of AMP from IMP. The sequence is that of Adenylosuccinate synthetase from Aspergillus niger (strain ATCC MYA-4892 / CBS 513.88 / FGSC A1513).